We begin with the raw amino-acid sequence, 561 residues long: DNA ligase B (561 aa).

Residue Lys128 is the N6-AMP-lysine intermediate of the active site.

This sequence belongs to the NAD-dependent DNA ligase family. LigB subfamily.

It carries out the reaction NAD(+) + (deoxyribonucleotide)n-3'-hydroxyl + 5'-phospho-(deoxyribonucleotide)m = (deoxyribonucleotide)n+m + AMP + beta-nicotinamide D-nucleotide.. Catalyzes the formation of phosphodiester linkages between 5'-phosphoryl and 3'-hydroxyl groups in double-stranded DNA using NAD as a coenzyme and as the energy source for the reaction. This is DNA ligase B from Pseudomonas syringae pv. tomato (strain ATCC BAA-871 / DC3000).